Consider the following 128-residue polypeptide: Ribonuclease P protein component (128 aa).

Belongs to the RnpA family. As to quaternary structure, consists of a catalytic RNA component (M1 or rnpB) and a protein subunit.

The enzyme catalyses Endonucleolytic cleavage of RNA, removing 5'-extranucleotides from tRNA precursor.. In terms of biological role, RNaseP catalyzes the removal of the 5'-leader sequence from pre-tRNA to produce the mature 5'-terminus. It can also cleave other RNA substrates such as 4.5S RNA. The protein component plays an auxiliary but essential role in vivo by binding to the 5'-leader sequence and broadening the substrate specificity of the ribozyme. The chain is Ribonuclease P protein component from Methylococcus capsulatus (strain ATCC 33009 / NCIMB 11132 / Bath).